The chain runs to 272 residues: GTP cyclohydrolase FolE2 (272 aa).

This sequence belongs to the GTP cyclohydrolase IV family.

The enzyme catalyses GTP + H2O = 7,8-dihydroneopterin 3'-triphosphate + formate + H(+). It participates in cofactor biosynthesis; 7,8-dihydroneopterin triphosphate biosynthesis; 7,8-dihydroneopterin triphosphate from GTP: step 1/1. Converts GTP to 7,8-dihydroneopterin triphosphate. In Polynucleobacter asymbioticus (strain DSM 18221 / CIP 109841 / QLW-P1DMWA-1) (Polynucleobacter necessarius subsp. asymbioticus), this protein is GTP cyclohydrolase FolE2.